The following is a 333-amino-acid chain: Holliday junction branch migration complex subunit RuvB (333 aa).

The segment at 1–182 (MDERLLSGES…FGVLSRLEYY (182 aa)) is large ATPase domain (RuvB-L). ATP is bound by residues Leu21, Arg22, Gly63, Lys66, Thr67, Thr68, 129–131 (EDF), Arg172, Tyr182, and Arg219. Thr67 serves as a coordination point for Mg(2+). The tract at residues 183–253 (TVDQLSAIVE…ITQMALELLQ (71 aa)) is small ATPAse domain (RuvB-S). Positions 256-333 (KLGLDHIDHK…EHFGMEIPKV (78 aa)) are head domain (RuvB-H). DNA is bound by residues Arg311 and Arg316.

Belongs to the RuvB family. In terms of assembly, homohexamer. Forms an RuvA(8)-RuvB(12)-Holliday junction (HJ) complex. HJ DNA is sandwiched between 2 RuvA tetramers; dsDNA enters through RuvA and exits via RuvB. An RuvB hexamer assembles on each DNA strand where it exits the tetramer. Each RuvB hexamer is contacted by two RuvA subunits (via domain III) on 2 adjacent RuvB subunits; this complex drives branch migration. In the full resolvosome a probable DNA-RuvA(4)-RuvB(12)-RuvC(2) complex forms which resolves the HJ.

The protein localises to the cytoplasm. It carries out the reaction ATP + H2O = ADP + phosphate + H(+). In terms of biological role, the RuvA-RuvB-RuvC complex processes Holliday junction (HJ) DNA during genetic recombination and DNA repair, while the RuvA-RuvB complex plays an important role in the rescue of blocked DNA replication forks via replication fork reversal (RFR). RuvA specifically binds to HJ cruciform DNA, conferring on it an open structure. The RuvB hexamer acts as an ATP-dependent pump, pulling dsDNA into and through the RuvAB complex. RuvB forms 2 homohexamers on either side of HJ DNA bound by 1 or 2 RuvA tetramers; 4 subunits per hexamer contact DNA at a time. Coordinated motions by a converter formed by DNA-disengaged RuvB subunits stimulates ATP hydrolysis and nucleotide exchange. Immobilization of the converter enables RuvB to convert the ATP-contained energy into a lever motion, pulling 2 nucleotides of DNA out of the RuvA tetramer per ATP hydrolyzed, thus driving DNA branch migration. The RuvB motors rotate together with the DNA substrate, which together with the progressing nucleotide cycle form the mechanistic basis for DNA recombination by continuous HJ branch migration. Branch migration allows RuvC to scan DNA until it finds its consensus sequence, where it cleaves and resolves cruciform DNA. This chain is Holliday junction branch migration complex subunit RuvB, found in Bacillus cereus (strain G9842).